The primary structure comprises 429 residues: Dihydroorotase (429 aa).

H61 and H63 together coordinate Zn(2+). Residues H63–R65 and N95 each bind substrate. Residues D153, H180, and H233 each coordinate Zn(2+). N279 contacts substrate. D306 is a binding site for Zn(2+). The active site involves D306. Substrate-binding positions include H310 and F324–G325.

The protein belongs to the metallo-dependent hydrolases superfamily. DHOase family. Class I DHOase subfamily. It depends on Zn(2+) as a cofactor.

It catalyses the reaction (S)-dihydroorotate + H2O = N-carbamoyl-L-aspartate + H(+). The protein operates within pyrimidine metabolism; UMP biosynthesis via de novo pathway; (S)-dihydroorotate from bicarbonate: step 3/3. Catalyzes the reversible cyclization of carbamoyl aspartate to dihydroorotate. This chain is Dihydroorotase, found in Ligilactobacillus salivarius (strain UCC118) (Lactobacillus salivarius).